The following is a 219-amino-acid chain: Small ribosomal subunit protein uS3 (219 aa).

The KH type-2 domain maps to 38–106 (VRKFVKTKLQ…QVAVNIVEVK (69 aa)).

This sequence belongs to the universal ribosomal protein uS3 family. Part of the 30S ribosomal subunit. Forms a tight complex with proteins S10 and S14.

Binds the lower part of the 30S subunit head. Binds mRNA in the 70S ribosome, positioning it for translation. The polypeptide is Small ribosomal subunit protein uS3 (Desulfitobacterium hafniense (strain DSM 10664 / DCB-2)).